The primary structure comprises 1492 residues: Putative leucine-rich repeat-containing protein DDB_G0290503 (1492 aa).

Residues 2-111 (SILLEGYLEK…WIEGIKDAIK (110 aa)) form the PH domain. LRR repeat units follow at residues 123-144 (LDGLIKTKDNDIIKLREKIKHL), 180-204 (IKSLTLQLSSKDESMKSLEKQVEKL), 258-284 (QESLNEIKDENNDLQSLIDTQKQQFEK), 329-351 (KNQFSTKLQLVNNEIQSLKSIVD), 352-375 (DKLKEIQLKDNQLTQLNQQHEIDN), 389-413 (ISKISNQLNEKDNKIQELSKQSIDK), 439-462 (LEKLNDINQLSNKLQDKENQILEI), 519-543 (INELQSNLNENQNKINELIENNQSS), 551-575 (LNQLSDKLQEKDEKLKSLESSIIER), 579-603 (IDQLQDNLNEKQDKINELVENNESS), 632-656 (INELQSNLNENQNKINELIENNQSS), 728-752 (LDELQSKLNEKQNEINQLIENNQSS), 806-830 (LKSLDSIIIENQEKLVQLTKSNQDS), 831-855 (LDELQSKLNEKQNEINELIENNQSS), 895-919 (INELQSKLNEKQNKINELVENNESS), 927-951 (LIQLSDQLQEKENQLKSFESSIIER), 955-979 (LNQLQSKLNEKQNEIDQITENNQSS), 1013-1036 (NEKLNEINEKDNKINELIQTNESL), 1044-1068 (FENLEQELEEKNNKILDLNSQIIDV), 1138-1164 (LQDLENELNLEKDTVNEKNDDINELKE), and 1210-1232 (NAHLKINEKDNEIHSLSKEGFNE). The interval 1272–1292 (RSSSSSLHQQQQMISPDLSNS) is disordered. The span at 1274–1286 (SSSSLHQQQQMIS) shows a compositional bias: low complexity. 2 LRR repeats span residues 1424–1444 (SSEKLQSIQLEIDTIREKYFF) and 1445–1468 (AIARSLKLQGAQMGWSMSRSIFDM).

This chain is Putative leucine-rich repeat-containing protein DDB_G0290503, found in Dictyostelium discoideum (Social amoeba).